We begin with the raw amino-acid sequence, 202 residues long: Glycerol-3-phosphate acyltransferase (202 aa).

4 helical membrane-spanning segments follow: residues 2–22 (ANLL…AVVV), 82–102 (DTGL…PVFH), 119–139 (AIDP…AFFF), and 158–178 (VLMN…VLLI).

The protein belongs to the PlsY family. Probably interacts with PlsX.

The protein localises to the cell inner membrane. It catalyses the reaction an acyl phosphate + sn-glycerol 3-phosphate = a 1-acyl-sn-glycero-3-phosphate + phosphate. It participates in lipid metabolism; phospholipid metabolism. Functionally, catalyzes the transfer of an acyl group from acyl-phosphate (acyl-PO(4)) to glycerol-3-phosphate (G3P) to form lysophosphatidic acid (LPA). This enzyme utilizes acyl-phosphate as fatty acyl donor, but not acyl-CoA or acyl-ACP. In Cupriavidus taiwanensis (strain DSM 17343 / BCRC 17206 / CCUG 44338 / CIP 107171 / LMG 19424 / R1) (Ralstonia taiwanensis (strain LMG 19424)), this protein is Glycerol-3-phosphate acyltransferase.